We begin with the raw amino-acid sequence, 138 residues long: Large ribosomal subunit protein uL14m (138 aa).

Belongs to the universal ribosomal protein uL14 family. In terms of assembly, component of the mitochondrial large ribosomal subunit (mt-LSU). Mature yeast 74S mitochondrial ribosomes consist of a small (37S) and a large (54S) subunit. The 37S small subunit contains a 15S ribosomal RNA (15S mt-rRNA) and 34 different proteins. The 54S large subunit contains a 21S rRNA (21S mt-rRNA) and 46 different proteins.

The protein localises to the mitochondrion. Functionally, component of the mitochondrial ribosome (mitoribosome), a dedicated translation machinery responsible for the synthesis of mitochondrial genome-encoded proteins, including at least some of the essential transmembrane subunits of the mitochondrial respiratory chain. The mitoribosomes are attached to the mitochondrial inner membrane and translation products are cotranslationally integrated into the membrane. The polypeptide is Large ribosomal subunit protein uL14m (MRPL38) (Saccharomyces cerevisiae (strain ATCC 204508 / S288c) (Baker's yeast)).